Here is an 82-residue protein sequence, read N- to C-terminus: Small ribosomal subunit protein eS27B (82 aa).

The segment at 37–59 (CPGCLNITTVFSHAQTAVTCESC) adopts a C4-type zinc-finger fold.

Belongs to the eukaryotic ribosomal protein eS27 family. Component of the small ribosomal subunit (SSU). Mature yeast ribosomes consist of a small (40S) and a large (60S) subunit. The 40S small subunit contains 1 molecule of ribosomal RNA (18S rRNA) and 33 different proteins (encoded by 57 genes). The large 60S subunit contains 3 rRNA molecules (25S, 5.8S and 5S rRNA) and 46 different proteins (encoded by 81 genes). Zn(2+) is required as a cofactor. The N-terminus is not modified.

It is found in the cytoplasm. Component of the ribosome, a large ribonucleoprotein complex responsible for the synthesis of proteins in the cell. The small ribosomal subunit (SSU) binds messenger RNAs (mRNAs) and translates the encoded message by selecting cognate aminoacyl-transfer RNA (tRNA) molecules. The large subunit (LSU) contains the ribosomal catalytic site termed the peptidyl transferase center (PTC), which catalyzes the formation of peptide bonds, thereby polymerizing the amino acids delivered by tRNAs into a polypeptide chain. The nascent polypeptides leave the ribosome through a tunnel in the LSU and interact with protein factors that function in enzymatic processing, targeting, and the membrane insertion of nascent chains at the exit of the ribosomal tunnel. The polypeptide is Small ribosomal subunit protein eS27B (Saccharomyces cerevisiae (strain ATCC 204508 / S288c) (Baker's yeast)).